A 188-amino-acid chain; its full sequence is Elongation factor P (188 aa).

Belongs to the elongation factor P family.

The protein localises to the cytoplasm. The protein operates within protein biosynthesis; polypeptide chain elongation. Its function is as follows. Involved in peptide bond synthesis. Stimulates efficient translation and peptide-bond synthesis on native or reconstituted 70S ribosomes in vitro. Probably functions indirectly by altering the affinity of the ribosome for aminoacyl-tRNA, thus increasing their reactivity as acceptors for peptidyl transferase. This is Elongation factor P from Sulfurovum sp. (strain NBC37-1).